Consider the following 322-residue polypeptide: Putative pyruvyl transferase EpsO (322 aa).

This sequence belongs to the polysaccharide pyruvyl transferase family.

May be involved in the production of the exopolysaccharide (EPS) component of the extracellular matrix during biofilm formation. EPS is responsible for the adhesion of chains of cells into bundles. The sequence is that of Putative pyruvyl transferase EpsO (epsO) from Bacillus subtilis (strain 168).